A 411-amino-acid chain; its full sequence is Heparan-sulfate 6-O-sulfotransferase 1 (411 aa).

The Cytoplasmic portion of the chain corresponds to 1 to 19 (MRRRRAGGRTMVERASKFV). The helical; Signal-anchor for type II membrane protein transmembrane segment at 20–37 (LVVAGSACFMLILYQYAG) threads the bilayer. Topologically, residues 38-411 (PGLSLGAPGG…DYMSHIIEKW (374 aa)) are lumenal. Residue 93–101 (HIQKTGGTT) participates in 3'-phosphoadenylyl sulfate binding. Residues 123–124 (KK), arginine 140, tryptophan 145, and histidine 150 contribute to the substrate site. The active-site Proton acceptor is the histidine 150. Positions 185 and 193 each coordinate 3'-phosphoadenylyl sulfate. Residues histidine 197 and tryptophan 204 each contribute to the substrate site. Residue asparagine 264 is glycosylated (N-linked (GlcNAc...) asparagine). 317–319 (MQY) serves as a coordination point for 3'-phosphoadenylyl sulfate. Asparagine 320 carries N-linked (GlcNAc...) asparagine glycosylation. 323–324 (RA) contacts 3'-phosphoadenylyl sulfate. The stretch at 352–386 (KDLFQQRYQYKRQLERREQRLRNREERLLHRSKEA) forms a coiled coil. The interval 380–401 (LHRSKEALPREDPEEPGRVPTE) is disordered.

Belongs to the sulfotransferase 6 family. N-glycosylated. In terms of tissue distribution, expressed in fetal brain and liver.

Its subcellular location is the membrane. The enzyme catalyses alpha-D-glucosaminyl-[heparan sulfate](n) + 3'-phosphoadenylyl sulfate = 6-sulfo-alpha-D-glucosaminyl-[heparan sulfate](n) + adenosine 3',5'-bisphosphate + H(+). Its function is as follows. 6-O-sulfation enzyme which catalyzes the transfer of sulfate from 3'-phosphoadenosine 5'-phosphosulfate (PAPS) to position 6 of the N-sulfoglucosamine residue (GlcNS) of heparan sulfate. Critical for normal neuronal development where it may play a role in neuron branching. May also play a role in limb development. May prefer iduronic acid. This chain is Heparan-sulfate 6-O-sulfotransferase 1, found in Mus musculus (Mouse).